The sequence spans 366 residues: Mitogen-activated protein kinase CPK1 (366 aa).

The 286-residue stretch at lysine 17–glutamate 302 folds into the Protein kinase domain. ATP is bound by residues valine 22–valine 30 and lysine 45. Residue aspartate 140 is the Proton acceptor of the active site. Threonine 181 bears the Phosphothreonine mark. A TXY motif is present at residues threonine 181–tyrosine 183. Tyrosine 183 carries the post-translational modification Phosphotyrosine.

It belongs to the protein kinase superfamily. CMGC Ser/Thr protein kinase family. MAP kinase subfamily. Mg(2+) serves as cofactor. Dually phosphorylated on Thr-181 and Tyr-183, which activates the enzyme.

The catalysed reaction is L-seryl-[protein] + ATP = O-phospho-L-seryl-[protein] + ADP + H(+). It catalyses the reaction L-threonyl-[protein] + ATP = O-phospho-L-threonyl-[protein] + ADP + H(+). Activated by tyrosine and threonine phosphorylation. In terms of biological role, responds to activation by environmental stress by phosphorylating downstream targets. This is Mitogen-activated protein kinase CPK1 (CPK1) from Cryptococcus neoformans var. neoformans serotype D (strain B-3501A) (Filobasidiella neoformans).